The following is a 61-amino-acid chain: Nakoroxin (61 aa).

Cystine bridges form between cysteine 3-cysteine 19, cysteine 12-cysteine 37, cysteine 41-cysteine 49, and cysteine 50-cysteine 55.

It belongs to the three-finger toxin family. Short-chain subfamily. As to expression, expressed by the venom gland.

The protein resides in the secreted. Its function is as follows. Shows no cytotoxicity and does not inhibit the binding of alpha-bungarotoxin to nicotinic acetylcholine receptors of muscle and alpha-7/CHRNA7 types. However, it potentiates the binding of alpha-bungarotoxin to the acetylcholine-binding protein from Lymnaea stagnalis. In Naja kaouthia (Monocled cobra), this protein is Nakoroxin.